Consider the following 147-residue polypeptide: MPGKKSPYGLFAGGKLKRKRKRFKWNDVTYKRKMLGLVEKYDPLEGAPMARGIVLEKVGVEARKPNAAVRKCVRVQLVKNGKVVTAFVPLDGSLNYINEHDEVVIERIGGPEGRSLGDIPGVRFKVIKVNGVSLWAIWSGKKQKPTR.

This sequence belongs to the universal ribosomal protein uS12 family. As to quaternary structure, part of the 30S ribosomal subunit.

Its function is as follows. With S4 and S5 plays an important role in translational accuracy. Located at the interface of the 30S and 50S subunits. The polypeptide is Small ribosomal subunit protein uS12 (Pyrobaculum arsenaticum (strain DSM 13514 / JCM 11321 / PZ6)).